We begin with the raw amino-acid sequence, 257 residues long: Phosphomannomutase (257 aa).

The active-site Nucleophile is Asp-19. Asp-19 and Asp-21 together coordinate Mg(2+). Asp-21 serves as the catalytic Proton donor/acceptor. 6 residues coordinate alpha-D-mannose 1-phosphate: Arg-28, Arg-133, Arg-144, Arg-151, Ser-189, and Asp-191. The Mg(2+) site is built by Asp-219, Phe-231, Asp-233, and Thr-236.

This sequence belongs to the eukaryotic PMM family. As to quaternary structure, homodimer.

The protein localises to the cytoplasm. The catalysed reaction is alpha-D-mannose 1-phosphate = D-mannose 6-phosphate. The protein operates within nucleotide-sugar biosynthesis; GDP-alpha-D-mannose biosynthesis; alpha-D-mannose 1-phosphate from D-fructose 6-phosphate: step 2/2. Functionally, involved in the synthesis of the GDP-mannose and dolichol-phosphate-mannose required for a number of critical mannosyl transfer reactions. This is Phosphomannomutase (pmm1) from Schizosaccharomyces pombe (strain 972 / ATCC 24843) (Fission yeast).